Reading from the N-terminus, the 377-residue chain is Nucleosome assembly protein 1;3 (377 aa).

Residues 26-80 (VNVLKNKLQGLTGKHSNVLENLSPNVRKRVEVLREIQTQHDELEAKFFEERAALE) adopt a coiled-coil conformation. Residues 47–62 (LSPNVRKRVEVLREIQ) carry the Nuclear export signal motif. The short motif at 223–228 (KKKPKK) is the Nuclear localization signal element. Positions 298-377 (EAAQDEDYID…GERPPECKQQ (80 aa)) are disordered. Acidic residues predominate over residues 300-341 (AQDEDYIDLEDDEDEEDDEDEDEDEEDEEEEDEDEDDDDEDE). A compositionally biased stretch (basic residues) spans 345–357 (KTKKKSSAGRKRS). Residue Cys-374 is modified to Cysteine methyl ester. Cys-374 carries the S-farnesyl cysteine lipid modification. Positions 375–377 (KQQ) are cleaved as a propeptide — removed in mature form.

Belongs to the nucleosome assembly protein (NAP) family. As to quaternary structure, can form homomeric and heteromeric protein complexes with NAP1;4. Binds histones H2A and H2B in vivo. Also able to bind histones H1 and H4 in vitro. Interacts with CYCB1;1 and with alpha tubulin.

The protein localises to the nucleus. It is found in the cytoplasm. In terms of biological role, may modulate chromatin structure by regulation of nucleosome assembly/disassembly. Could function together with B-type cyclins in the regulation of microtubule dynamics. This Nicotiana tabacum (Common tobacco) protein is Nucleosome assembly protein 1;3 (NAP1;3).